Reading from the N-terminus, the 126-residue chain is UPF0212 protein TON_0350 (126 aa).

It belongs to the UPF0212 family.

The polypeptide is UPF0212 protein TON_0350 (Thermococcus onnurineus (strain NA1)).